The sequence spans 220 residues: MNHLRLQILDQATCERLLERLANEAEWLDGSLTAGAHAKGGKRNFQINYDSALRKEIHELVERAMWNHPVVKGFCLPRKLHRFLISKTEKEGGYDTHVDNAYMSSGRSDLSFTLSLTDDTMYEGGDLEIDSISESYPIKLKQGEILIYPSTSLHRVCNVTSGIRTVCVGWIESYVQAENDRICLFQLESGARAVLAKHGRSDELDLIFLAYTNLLRRLGG.

The region spanning 79–173 (KLHRFLISKT…RTVCVGWIES (95 aa)) is the Fe2OG dioxygenase domain. 3 residues coordinate Fe cation: His-97, Asp-99, and His-154. Arg-164 is a binding site for 2-oxoglutarate.

Fe(2+) serves as cofactor. It depends on L-ascorbate as a cofactor.

The polypeptide is PKHD-type hydroxylase sync_1544 (Synechococcus sp. (strain CC9311)).